The following is a 462-amino-acid chain: Elongation factor 1-alpha (462 aa).

Residue G2 is modified to Blocked amino end (Gly). Residues K5 to T242 enclose the tr-type G domain. Residues G14–S21 are G1. G14–S21 contacts GTP. Position 36 is an N6,N6,N6-trimethyllysine (K36). An N6-methyllysine modification is found at K55. The G2 stretch occupies residues G70–D74. K79 is subject to N6,N6,N6-trimethyllysine. The interval D91–G94 is G3. Residues D91–H95 and N153–D156 contribute to the GTP site. A G4 region spans residues N153–D156. The segment at S194–W196 is G5. K219 and K318 each carry N6,N6,N6-trimethyllysine. E374 is modified (5-glutamyl glycerylphosphorylethanolamine).

The protein belongs to the TRAFAC class translation factor GTPase superfamily. Classic translation factor GTPase family. EF-Tu/EF-1A subfamily. Post-translationally, the N-terminus is blocked.

It is found in the cytoplasm. This protein promotes the GTP-dependent binding of aminoacyl-tRNA to the A-site of ribosomes during protein biosynthesis. This is Elongation factor 1-alpha from Artemia salina (Brine shrimp).